The sequence spans 9439 residues: Extracellular matrix-binding protein ebh (9439 aa).

29 consecutive FIVAR domains span residues 1815 to 1871 (ARRR…VNSA), 1901 to 1957 (AKEQ…INDA), 1985 to 2041 (AYDT…VRDA), 2071 to 2127 (AKKR…ITSE), 2155 to 2211 (AYNK…VTQA), 2241 to 2297 (AKNR…ISSE), 2325 to 2381 (AYNK…VEDA), 2411 to 2467 (AKEK…ITEN), 2488 to 2551 (DTTS…VNNA), 2581 to 2638 (ARNR…STEI), 2665 to 2720 (AKNQ…IRTN), 2748 to 2804 (AKTA…VSDE), 2832 to 2888 (AYNQ…VNNA), 2918 to 2974 (AKEQ…ISNA), 3002 to 3058 (AYNQ…VTAA), 3088 to 3144 (AKQQ…ITNE), 3172 to 3228 (AYNQ…VAQA), 3258 to 3314 (AKNQ…ISDE), 3335 to 3398 (DTTE…VNNA), 3428 to 3484 (ARLN…ITTE), 3512 to 3567 (AKTA…IKTN), 3595 to 3650 (IKRQ…VKES), 3678 to 3733 (AKNR…IRQN), 3802 to 3860 (SMTA…IDQK), 3928 to 3983 (AMTQ…LDPA), 4056 to 4114 (AMQA…VNQK), 4182 to 4240 (SMGT…VDNA), 4308 to 4365 (AMHT…INQK), and 4433 to 4491 (VMEQ…IEQA). The segment covering 2495 to 2507 (EVRKLSRRGDTNN) has biased composition (basic and acidic residues). Residues 2495–2514 (EVRKLSRRGDTNNKKPSSVS) form a disordered region. The span at 2925-2938 (AVDQVPSTEGMTQQ) shows a compositional bias: polar residues. The tract at residues 2925-2951 (AVDQVPSTEGMTQQTKDDYNSKQQAAQ) is disordered. Positions 4522-4542 (LSGLTNEQKPKENQAVNGAQT) are disordered. The region spanning 4559 to 4617 (SMQTLRDLVNNQNAIHSTSNYFNEDSTQKNTYDNAIDNGSTYITGQHNPELNKSTIDQT) is the FIVAR 30 domain. The interval 4648–4671 (LGYLNDPQKSGEESLVNGSNTRSE) is disordered. FIVAR domains lie at 4685-4743 (AMKQ…IEQK), 4811-4869 (AMQA…IEQA), 4937-4995 (AMSN…IEQA), 5063-5115 (AMEA…VLDK), 5189-5246 (AMLG…INQL), 5314-5372 (LMGA…VTTA), 5440-5498 (AMGE…IDQA), 5566-5624 (AMKK…ITNA), 5692-5750 (AMKQ…IADT), 5818-5875 (DMST…LQDL), 5943-6000 (AMKA…IKQA), 6068-6126 (KMEE…INRT), 6194-6252 (AMQQ…IQAI), and 6320-6378 (EMGT…IADA). The segment covering 5699–5712 (QVNQDDQISNSSPF) has biased composition (polar residues). The disordered stretch occupies residues 5699–5719 (QVNQDDQISNSSPFINEDSDK). The segment at 6413-6434 (NNSQRQSEHDEINSAPSRTEVS) is disordered. FIVAR domains are found at residues 6446-6504 (AMRQ…IEDA), 6572-6630 (AMKA…INRA), 6698-6755 (SMNQ…IDQA), 6823-6877 (TMKA…ANDE), 6949-7007 (AMKK…INTI), 7075-7133 (SMNT…VERA), 7201-7259 (DMKK…IENA), 7327-7384 (AMKH…IKQL), 7452-7510 (AMEN…IEHA), 7578-7636 (AMKA…INSI), 7704-7762 (AMET…VDIV), 7830-7888 (AMKS…VRQA), 7956-8010 (VMGK…TKQA), 8078-8137 (IMGE…IDTF), 8205-8264 (AMKS…IQGL), 8332-8391 (AMKD…VLGL), 8459-8518 (KMKL…IQHL), and 8587-8643 (AMQG…ANII). Residues 9306-9324 (TVGVITLTGLLSSFWLVLA) form a helical membrane-spanning segment. 3 stretches are compositionally biased toward basic and acidic residues: residues 9363-9375 (DKEEQIQNDDKHS), 9386-9395 (EKQLSEEDIH), and 9404-9413 (QNSDNKDTKQ). Residues 9363 to 9439 (DKEEQIQNDD…VVKTKKRSKK (77 aa)) are disordered. Residues 9414 to 9439 (KKVTSKKKKTPQSTKKVVKTKKRSKK) are compositionally biased toward basic residues.

It is found in the cell membrane. In Staphylococcus epidermidis (strain ATCC 35984 / DSM 28319 / BCRC 17069 / CCUG 31568 / BM 3577 / RP62A), this protein is Extracellular matrix-binding protein ebh (ebh).